The primary structure comprises 155 residues: Endoribonuclease YbeY (155 aa).

Zn(2+)-binding residues include His120, His124, and His130.

Belongs to the endoribonuclease YbeY family. Requires Zn(2+) as cofactor.

It localises to the cytoplasm. Its function is as follows. Single strand-specific metallo-endoribonuclease involved in late-stage 70S ribosome quality control and in maturation of the 3' terminus of the 16S rRNA. In Alkaliphilus metalliredigens (strain QYMF), this protein is Endoribonuclease YbeY.